The primary structure comprises 139 residues: AP-4 complex subunit sigma (139 aa).

It belongs to the adaptor complexes small subunit family. As to quaternary structure, may be part of the adaptor protein complex 4 (AP-4), a heterotetramer composed of two large adaptins (epsilon-type subunitand beta-type subunit), a medium adaptin (mu-type subunit) and a small adaptin (sigma-type).

It localises to the golgi apparatus. It is found in the trans-Golgi network membrane. Its function is as follows. Probable component of an adaptor protein complex. Adaptor protein complexes are vesicle coat components involved both in vesicle formation and cargo selection. They control the vesicular transport of proteins in different trafficking pathways. The sequence is that of AP-4 complex subunit sigma from Dictyostelium discoideum (Social amoeba).